Here is a 119-residue protein sequence, read N- to C-terminus: UPF0102 protein Nmul_A0195 (119 aa).

It belongs to the UPF0102 family.

This Nitrosospira multiformis (strain ATCC 25196 / NCIMB 11849 / C 71) protein is UPF0102 protein Nmul_A0195.